The following is a 205-amino-acid chain: Holliday junction branch migration complex subunit RuvA (205 aa).

The interval 1–63 is domain I; the sequence is MIDFVEGTLS…EDAILLYGFA (63 aa). The domain II stretch occupies residues 64–142; the sequence is TRDERDLFRK…GYTPSAILTV (79 aa). The flexible linker stretch occupies residues 143 to 153; sequence AAGDLTAGEQA. Positions 153 to 205 are domain III; it reads AVSALNEALDALTALGYSDGELQKIRNTLSEKSKEGDGVEKLIKQGLALLMRG.

Belongs to the RuvA family. As to quaternary structure, homotetramer. Forms an RuvA(8)-RuvB(12)-Holliday junction (HJ) complex. HJ DNA is sandwiched between 2 RuvA tetramers; dsDNA enters through RuvA and exits via RuvB. An RuvB hexamer assembles on each DNA strand where it exits the tetramer. Each RuvB hexamer is contacted by two RuvA subunits (via domain III) on 2 adjacent RuvB subunits; this complex drives branch migration. In the full resolvosome a probable DNA-RuvA(4)-RuvB(12)-RuvC(2) complex forms which resolves the HJ.

The protein localises to the cytoplasm. Functionally, the RuvA-RuvB-RuvC complex processes Holliday junction (HJ) DNA during genetic recombination and DNA repair, while the RuvA-RuvB complex plays an important role in the rescue of blocked DNA replication forks via replication fork reversal (RFR). RuvA specifically binds to HJ cruciform DNA, conferring on it an open structure. The RuvB hexamer acts as an ATP-dependent pump, pulling dsDNA into and through the RuvAB complex. HJ branch migration allows RuvC to scan DNA until it finds its consensus sequence, where it cleaves and resolves the cruciform DNA. The polypeptide is Holliday junction branch migration complex subunit RuvA (Brevibacillus brevis (strain 47 / JCM 6285 / NBRC 100599)).